A 98-amino-acid chain; its full sequence is MASIYLNLMMAFLLALSGVLIYRSHLMSTLLCLEGMMLSLFIMMTLTISHFQMFSLSMAPLILLVFSACEAGIGLALLVKTSNAHGNDHVQNLNLLQC.

A run of 3 helical transmembrane segments spans residues 1–21 (MASIYLNLMMAFLLALSGVLI), 26–46 (LMSTLLCLEGMMLSLFIMMTL), and 59–79 (APLILLVFSACEAGIGLALLV).

Belongs to the complex I subunit 4L family. As to quaternary structure, core subunit of respiratory chain NADH dehydrogenase (Complex I) which is composed of 45 different subunits.

Its subcellular location is the mitochondrion inner membrane. The catalysed reaction is a ubiquinone + NADH + 5 H(+)(in) = a ubiquinol + NAD(+) + 4 H(+)(out). Its function is as follows. Core subunit of the mitochondrial membrane respiratory chain NADH dehydrogenase (Complex I) which catalyzes electron transfer from NADH through the respiratory chain, using ubiquinone as an electron acceptor. Part of the enzyme membrane arm which is embedded in the lipid bilayer and involved in proton translocation. In Caenolestes fuliginosus (Shrew opossum), this protein is NADH-ubiquinone oxidoreductase chain 4L (MT-ND4L).